We begin with the raw amino-acid sequence, 322 residues long: Ferrochelatase (322 aa).

The Fe cation site is built by His-193 and Glu-274.

This sequence belongs to the ferrochelatase family.

The protein resides in the cytoplasm. It catalyses the reaction heme b + 2 H(+) = protoporphyrin IX + Fe(2+). The protein operates within porphyrin-containing compound metabolism; protoheme biosynthesis; protoheme from protoporphyrin-IX: step 1/1. Catalyzes the ferrous insertion into protoporphyrin IX. The sequence is that of Ferrochelatase from Photobacterium profundum (strain SS9).